Consider the following 539-residue polypeptide: Chaperonin GroEL (539 aa).

ATP-binding positions include 30 to 33, K51, 87 to 91, G415, and D495; these read TLGP and DGTTT.

It belongs to the chaperonin (HSP60) family. Forms a cylinder of 14 subunits composed of two heptameric rings stacked back-to-back. Interacts with the co-chaperonin GroES.

The protein resides in the cytoplasm. The enzyme catalyses ATP + H2O + a folded polypeptide = ADP + phosphate + an unfolded polypeptide.. Its function is as follows. Together with its co-chaperonin GroES, plays an essential role in assisting protein folding. The GroEL-GroES system forms a nano-cage that allows encapsulation of the non-native substrate proteins and provides a physical environment optimized to promote and accelerate protein folding. This chain is Chaperonin GroEL, found in Serratia rubidaea (Serratia marinorubra).